Consider the following 490-residue polypeptide: Cytochrome P450 2C20 (490 aa).

Cys435 provides a ligand contact to heme.

The protein belongs to the cytochrome P450 family. Heme is required as a cofactor.

Its subcellular location is the endoplasmic reticulum membrane. It localises to the microsome membrane. The catalysed reaction is an organic molecule + reduced [NADPH--hemoprotein reductase] + O2 = an alcohol + oxidized [NADPH--hemoprotein reductase] + H2O + H(+). Functionally, cytochromes P450 are a group of heme-thiolate monooxygenases. In liver microsomes, this enzyme is involved in an NADPH-dependent electron transport pathway. It oxidizes a variety of structurally unrelated compounds, including steroids, fatty acids, and xenobiotics. This Macaca fascicularis (Crab-eating macaque) protein is Cytochrome P450 2C20 (CYP2C20).